The chain runs to 271 residues: Chitinase 6 (271 aa).

An N-terminal signal peptide occupies residues 1-20; that stretch reads MARRLSLLAVVLAMVAAVSA. A Chitin-binding type-1 domain is found at 25-60; the sequence is AQSCGCASDQCCSKWGFCGTGSDYCGTGCQAGPCDV. Intrachain disulfides connect Cys28–Cys36, Cys30–Cys42, Cys35–Cys49, Cys88–Cys137, Cys150–Cys159, and Cys239–Cys271. The active-site Proton donor is the Glu132. Asn268 carries N-linked (GlcNAc...) asparagine glycosylation.

This sequence belongs to the glycosyl hydrolase 19 family. Chitinase class IV subfamily. Expressed in roots, leaves, sheaths and meristems.

It carries out the reaction Random endo-hydrolysis of N-acetyl-beta-D-glucosaminide (1-&gt;4)-beta-linkages in chitin and chitodextrins.. Functionally, may function in reproductive organs during embryogenesis and seed maturation. The protein is Chitinase 6 (Cht6) of Oryza sativa subsp. japonica (Rice).